A 593-amino-acid chain; its full sequence is Cyclin-dependent kinase-like 3 (593 aa).

The region spanning 4 to 286 (YETLGKVGEG…STDLLHHDYF (283 aa)) is the Protein kinase domain. ATP contacts are provided by residues 10 to 18 (VGEGSYGTV) and Lys-33. A [NKR]KIAxRE motif is present at residues 45-51 (KIATREI). Residue Asp-125 is the Proton acceptor of the active site. Thr-158 carries the phosphothreonine modification. Tyr-160 carries the post-translational modification Phosphotyrosine. The segment covering 368–403 (GKGDVPDLKKTESEGEHRQQGTAEDTHPTSLDRKPS) has biased composition (basic and acidic residues). The segment at 368-512 (GKGDVPDLKK…NDQIASGNKR (145 aa)) is disordered. The span at 436 to 452 (NLTSSNLLAANPSSNLS) shows a compositional bias: low complexity. 2 stretches are compositionally biased toward polar residues: residues 468–491 (SSQT…QVQT) and 499–508 (RTGQNDQIAS).

This sequence belongs to the protein kinase superfamily. CMGC Ser/Thr protein kinase family. CDC2/CDKX subfamily. In terms of tissue distribution, highly expressed in brain, and to a lower extent in heart and testis.

The protein localises to the nucleus. It localises to the cytoplasm. It catalyses the reaction L-seryl-[protein] + ATP = O-phospho-L-seryl-[protein] + ADP + H(+). It carries out the reaction L-threonyl-[protein] + ATP = O-phospho-L-threonyl-[protein] + ADP + H(+). The polypeptide is Cyclin-dependent kinase-like 3 (Rattus norvegicus (Rat)).